The sequence spans 254 residues: Triosephosphate isomerase (254 aa).

Substrate is bound at residue 12–14 (NWK). H99 acts as the Electrophile in catalysis. Residue E169 is the Proton acceptor of the active site. Substrate is bound by residues G175, S214, and 235–236 (GG).

The protein belongs to the triosephosphate isomerase family. Homodimer.

Its subcellular location is the cytoplasm. It carries out the reaction D-glyceraldehyde 3-phosphate = dihydroxyacetone phosphate. It functions in the pathway carbohydrate biosynthesis; gluconeogenesis. The protein operates within carbohydrate degradation; glycolysis; D-glyceraldehyde 3-phosphate from glycerone phosphate: step 1/1. Its function is as follows. Involved in the gluconeogenesis. Catalyzes stereospecifically the conversion of dihydroxyacetone phosphate (DHAP) to D-glyceraldehyde-3-phosphate (G3P). In Bartonella henselae (strain ATCC 49882 / DSM 28221 / CCUG 30454 / Houston 1) (Rochalimaea henselae), this protein is Triosephosphate isomerase.